The chain runs to 1487 residues: Murinoglobulin-1 (1487 aa).

A signal peptide spans 1-24 (MKKNREAQLCLFSALLAFLPFASL). Cys-48 and Cys-86 are disulfide-bonded. 2 N-linked (GlcNAc...) asparagine glycosylation sites follow: Asn-55 and Asn-247. Disulfide bonds link Cys-251/Cys-283 and Cys-269/Cys-295. N-linked (GlcNAc...) asparagine glycans are attached at residues Asn-301, Asn-321, Asn-393, and Asn-508. Disulfide bonds link Cys-468–Cys-563, Cys-595–Cys-784, and Cys-643–Cys-689. The bait region stretch occupies residues 686 to 745 (PTYCYEMNMVVLSAPAVESELSPRGGEFEMMPLGVNKSPLPKEPPRKDPPPKDPVIETIR). N-linked (GlcNAc...) asparagine glycans are attached at residues Asn-760, Asn-787, and Asn-882. Cystine bridges form between Cys-860–Cys-896, Cys-934–Cys-1334, Cys-1092–Cys-1140, and Cys-1365–Cys-1480. A cross-link (isoglutamyl cysteine thioester (Cys-Gln)) is located at residues 985 to 988 (CGEQ). Asn-1004 carries N-linked (GlcNAc...) asparagine glycosylation. Asn-1153, Asn-1324, and Asn-1437 each carry an N-linked (GlcNAc...) asparagine glycan.

This sequence belongs to the protease inhibitor I39 (alpha-2-macroglobulin) family. In terms of assembly, monomer. As to expression, plasma.

It localises to the secreted. A proteinase activates the inhibitor by specific proteolysis in the bait region, which, by an unknown mechanism leads to reaction at the cysteinyl-glutamyl internal thiol ester site and to a conformational change, whereby the proteinase is trapped and/or covalently bound to the inhibitor. While in the tetrameric proteinase inhibitors steric inhibition is sufficiently strong, monomeric forms need a covalent linkage between the activated glutamyl residue of the original thiol ester and a terminal amino group of a lysine or another nucleophilic group on the proteinase, for inhibition to be effective. The protein is Murinoglobulin-1 of Rattus norvegicus (Rat).